We begin with the raw amino-acid sequence, 265 residues long: uncharacterized protein (265 aa).

The first 22 residues, 1 to 22 (MGYFKRVLLYIIVMVLSVFIIG), serve as a signal peptide directing secretion. C23 carries N-palmitoyl cysteine lipidation. C23 carries S-diacylglycerol cysteine lipidation.

This sequence belongs to the staphylococcal tandem lipoprotein family.

Its subcellular location is the cell membrane. This is an uncharacterized protein from Staphylococcus aureus (strain MSSA476).